The sequence spans 213 residues: Superoxide dismutase [Fe] (213 aa).

Residues His-28, His-82, Asp-164, and His-168 each contribute to the Fe cation site.

Belongs to the iron/manganese superoxide dismutase family. Homotetramer. Requires Fe cation as cofactor.

The enzyme catalyses 2 superoxide + 2 H(+) = H2O2 + O2. Functionally, destroys superoxide anion radicals which are normally produced within the cells and which are toxic to biological systems. The sequence is that of Superoxide dismutase [Fe] (sodB) from Aquifex aeolicus (strain VF5).